We begin with the raw amino-acid sequence, 101 residues long: Large ribosomal subunit protein bL21 (101 aa).

This sequence belongs to the bacterial ribosomal protein bL21 family. In terms of assembly, part of the 50S ribosomal subunit. Contacts protein L20.

In terms of biological role, this protein binds to 23S rRNA in the presence of protein L20. This Corynebacterium efficiens (strain DSM 44549 / YS-314 / AJ 12310 / JCM 11189 / NBRC 100395) protein is Large ribosomal subunit protein bL21.